Here is a 197-residue protein sequence, read N- to C-terminus: Amino-terminal enhancer of split (197 aa).

Over residues 1–15 the composition is skewed to low complexity; it reads MMFPQSSSRHSGSSH. Disordered regions lie at residues 1 to 20 and 169 to 197; these read MMFP…PQQL and LGSQ…DKSD. A CCN domain region spans residues 166 to 197; it reads LSALGSQGHLPKEDKNGHEGDRRPDDDGDKSD. A compositionally biased stretch (basic and acidic residues) spans 175 to 197; sequence LPKEDKNGHEGDRRPDDDGDKSD.

The protein belongs to the WD repeat Groucho/TLE family. Monomer. Ubiquitinated by XIAP/BIRC4. As to expression, predominantly expressed in brain, testis and ovary. Ubiquitously expressed in the developing embryo. Present in unfertilized and fertilized eggs.

Its subcellular location is the nucleus. Functionally, may act as a transcriptional corepressor. Has a possible role in the negative regulation of proteins containing WD-40 repeats. May be required for the initiation and maintenance of the differentiated state. The sequence is that of Amino-terminal enhancer of split (aes) from Xenopus laevis (African clawed frog).